A 131-amino-acid polypeptide reads, in one-letter code: Large ribosomal subunit protein bL17 (131 aa).

Belongs to the bacterial ribosomal protein bL17 family. As to quaternary structure, part of the 50S ribosomal subunit. Contacts protein L32.

This Methylacidiphilum infernorum (isolate V4) (Methylokorus infernorum (strain V4)) protein is Large ribosomal subunit protein bL17.